The following is a 479-amino-acid chain: Cardiolipin synthase A (479 aa).

A run of 2 helical transmembrane segments spans residues 8–28 (IFGY…IHAV) and 38–58 (IAWA…YLVF). 2 consecutive PLD phosphodiesterase domains span residues 218 to 245 (VNFR…GDEY) and 392 to 419 (QPGF…DNRS). Active-site residues include histidine 223, lysine 225, aspartate 230, histidine 397, lysine 399, and aspartate 404.

This sequence belongs to the phospholipase D family. Cardiolipin synthase subfamily. ClsA sub-subfamily.

The protein localises to the cell inner membrane. It carries out the reaction 2 a 1,2-diacyl-sn-glycero-3-phospho-(1'-sn-glycerol) = a cardiolipin + glycerol. Its function is as follows. Catalyzes the reversible phosphatidyl group transfer from one phosphatidylglycerol molecule to another to form cardiolipin (CL) (diphosphatidylglycerol) and glycerol. The sequence is that of Cardiolipin synthase A from Pseudomonas fluorescens (strain ATCC BAA-477 / NRRL B-23932 / Pf-5).